Here is a 428-residue protein sequence, read N- to C-terminus: Tyrosine--tRNA ligase (428 aa).

Tyr-41 contributes to the L-tyrosine binding site. A 'HIGH' region motif is present at residues 46–55 (PTADSLHLGH). 2 residues coordinate L-tyrosine: Tyr-179 and Gln-183. The 'KMSKS' region motif lies at 239–243 (KFGKT). Lys-242 contacts ATP. One can recognise an S4 RNA-binding domain in the interval 361-418 (ADLMQALVDAELQPSRGQARKTIASNAVTINGEKQSDPEYIFNDEDRLFGRYTLLRRG).

The protein belongs to the class-I aminoacyl-tRNA synthetase family. TyrS type 1 subfamily. As to quaternary structure, homodimer.

Its subcellular location is the cytoplasm. It carries out the reaction tRNA(Tyr) + L-tyrosine + ATP = L-tyrosyl-tRNA(Tyr) + AMP + diphosphate + H(+). Catalyzes the attachment of tyrosine to tRNA(Tyr) in a two-step reaction: tyrosine is first activated by ATP to form Tyr-AMP and then transferred to the acceptor end of tRNA(Tyr). This chain is Tyrosine--tRNA ligase, found in Salmonella paratyphi C (strain RKS4594).